We begin with the raw amino-acid sequence, 43 residues long: Thaumatin-like protein 1 (43 aa).

It belongs to the thaumatin family.

This chain is Thaumatin-like protein 1, found in Glebionis coronaria (Crown daisy).